Reading from the N-terminus, the 249-residue chain is Type-1Aa cytolytic delta-endotoxin (249 aa).

It belongs to the cyt1/cyt2 endotoxin family. Post-translationally, active after proteolytic processing.

Functionally, kills the larvae of dipteran insects by making pores in the epithelial cell membrane of the insect midgut. Acts on mosquitos and black flies. The polypeptide is Type-1Aa cytolytic delta-endotoxin (cyt1Aa) (Bacillus thuringiensis subsp. morrisoni).